Here is a 132-residue protein sequence, read N- to C-terminus: Small ribosomal subunit protein uS8 (132 aa).

Belongs to the universal ribosomal protein uS8 family. In terms of assembly, part of the 30S ribosomal subunit. Contacts proteins S5 and S12.

One of the primary rRNA binding proteins, it binds directly to 16S rRNA central domain where it helps coordinate assembly of the platform of the 30S subunit. This is Small ribosomal subunit protein uS8 from Lysinibacillus sphaericus (strain C3-41).